The primary structure comprises 382 residues: Cytoplasmic tRNA 2-thiolation protein 2 (382 aa).

It belongs to the CTU2/NCS2 family.

Its subcellular location is the cytoplasm. Its pathway is tRNA modification; 5-methoxycarbonylmethyl-2-thiouridine-tRNA biosynthesis. Its function is as follows. Plays a central role in 2-thiolation of mcm(5)S(2)U at tRNA wobble positions of tRNA(Lys), tRNA(Glu) and tRNA(Gln). May act by forming a heterodimer with NCS6 that ligates sulfur from thiocarboxylated URM1 onto the uridine of tRNAs at wobble position. Prior mcm(5) tRNA modification by the elongator complex is required for 2-thiolation. May also be involved in protein urmylation. This is Cytoplasmic tRNA 2-thiolation protein 2 from Phaeosphaeria nodorum (strain SN15 / ATCC MYA-4574 / FGSC 10173) (Glume blotch fungus).